A 147-amino-acid polypeptide reads, in one-letter code: Lysozyme C-1 (147 aa).

The first 18 residues, 1–18 (MKALIILGLLCLSVAVQG), serve as a signal peptide directing secretion. In terms of domain architecture, C-type lysozyme spans 19–147 (KVFERCELAR…VSSYVEGCSL (129 aa)). 4 cysteine pairs are disulfide-bonded: C24-C145, C48-C133, C83-C99, and C95-C113. Active-site residues include E53 and D71.

It belongs to the glycosyl hydrolase 22 family. As to quaternary structure, monomer. Expressed in stomach.

Its subcellular location is the secreted. The catalysed reaction is Hydrolysis of (1-&gt;4)-beta-linkages between N-acetylmuramic acid and N-acetyl-D-glucosamine residues in a peptidoglycan and between N-acetyl-D-glucosamine residues in chitodextrins.. In terms of biological role, lysozymes have primarily a bacteriolytic function; those in tissues and body fluids are associated with the monocyte-macrophage system and enhance the activity of immunoagents. This is Lysozyme C-1 from Ovis aries (Sheep).